Consider the following 647-residue polypeptide: DNA polymerase subunit gamma-1 (647 aa).

The disordered stretch occupies residues 116-147; that stretch reads ERPGRAEQSQMQDEDGLPELVEESSQPSFHHG. Residues 127 to 137 are compositionally biased toward acidic residues; it reads QDEDGLPELVE.

Belongs to the DNA polymerase type-A family. Heterotrimer composed of a catalytic subunit and a homodimer of accessory subunits. Interacts with TTC3. Mg(2+) is required as a cofactor.

The protein resides in the mitochondrion. It is found in the mitochondrion matrix. It localises to the mitochondrion nucleoid. The catalysed reaction is DNA(n) + a 2'-deoxyribonucleoside 5'-triphosphate = DNA(n+1) + diphosphate. Functionally, involved in the replication of mitochondrial DNA. Associates with mitochondrial DNA. This Gallus gallus (Chicken) protein is DNA polymerase subunit gamma-1 (POLG).